A 311-amino-acid polypeptide reads, in one-letter code: Mycinamicin-resistance protein MyrB (311 aa).

S-adenosyl-L-methionine contacts are provided by N27, L29, G54, E75, and D98. The segment at 272-311 is disordered; sequence PAPAGRSVRARPGSVGPDRSLPPRGLRSGPPRARRRGGGA. Positions 293–302 are enriched in low complexity; that stretch reads PPRGLRSGPP.

This sequence belongs to the class I-like SAM-binding methyltransferase superfamily. rRNA adenine N(6)-methyltransferase family.

Its function is as follows. Confers resistance to macrolide, lincosamide and streptogramin B antibiotics. This is Mycinamicin-resistance protein MyrB (myrB) from Micromonospora griseorubida.